The primary structure comprises 69 residues: ATP synthase protein 8 (69 aa).

A helical transmembrane segment spans residues 8 to 24; sequence TWTLTISLMIISLFCIY. Residue Lys55 is modified to N6-acetyllysine; alternate. Lys55 is modified (N6-succinyllysine; alternate). The residue at position 58 (Lys58) is an N6-acetyllysine.

It belongs to the ATPase protein 8 family. As to quaternary structure, F-type ATPases have 2 components, CF(1) - the catalytic core - and CF(0) - the membrane proton channel. Component of an ATP synthase complex composed of ATP5PB, ATP5MC1, ATP5F1E, ATP5PD, ATP5ME, ATP5PF, ATP5MF, MT-ATP6, MT-ATP8, ATP5F1A, ATP5F1B, ATP5F1D, ATP5F1C, ATP5PO, ATP5MG, ATP5MK and ATP5MJ. Interacts with PRICKLE3.

Its subcellular location is the mitochondrion membrane. Its function is as follows. Mitochondrial membrane ATP synthase (F(1)F(0) ATP synthase or Complex V) produces ATP from ADP in the presence of a proton gradient across the membrane which is generated by electron transport complexes of the respiratory chain. F-type ATPases consist of two structural domains, F(1) - containing the extramembraneous catalytic core and F(0) - containing the membrane proton channel, linked together by a central stalk and a peripheral stalk. During catalysis, ATP synthesis in the catalytic domain of F(1) is coupled via a rotary mechanism of the central stalk subunits to proton translocation. Part of the complex F(0) domain. Minor subunit located with subunit a in the membrane. This is ATP synthase protein 8 (MT-ATP8) from Didelphis virginiana (North American opossum).